The chain runs to 358 residues: Peptide chain release factor 1 (358 aa).

Q236 carries the N5-methylglutamine modification.

It belongs to the prokaryotic/mitochondrial release factor family. Post-translationally, methylated by PrmC. Methylation increases the termination efficiency of RF1.

Its subcellular location is the cytoplasm. Functionally, peptide chain release factor 1 directs the termination of translation in response to the peptide chain termination codons UAG and UAA. In Corynebacterium efficiens (strain DSM 44549 / YS-314 / AJ 12310 / JCM 11189 / NBRC 100395), this protein is Peptide chain release factor 1.